The chain runs to 355 residues: N-acetyl-gamma-glutamyl-phosphate reductase (355 aa).

Cys-152 is an active-site residue.

It belongs to the NAGSA dehydrogenase family. Type 1 subfamily.

It localises to the cytoplasm. The catalysed reaction is N-acetyl-L-glutamate 5-semialdehyde + phosphate + NADP(+) = N-acetyl-L-glutamyl 5-phosphate + NADPH + H(+). Its pathway is amino-acid biosynthesis; L-arginine biosynthesis; N(2)-acetyl-L-ornithine from L-glutamate: step 3/4. Functionally, catalyzes the NADPH-dependent reduction of N-acetyl-5-glutamyl phosphate to yield N-acetyl-L-glutamate 5-semialdehyde. This chain is N-acetyl-gamma-glutamyl-phosphate reductase, found in Psychrobacter sp. (strain PRwf-1).